Reading from the N-terminus, the 466-residue chain is Vacuolar-processing enzyme delta-isozyme (466 aa).

An N-terminal signal peptide occupies residues 1–24 (MSSPLGHFQILVFLHALLIFSAES). N-linked (GlcNAc...) asparagine glycosylation occurs at asparagine 137. Residue histidine 164 is part of the active site. Residue cysteine 206 is the Nucleophile of the active site. The cysteines at positions 239 and 253 are disulfide-linked. An N-linked (GlcNAc...) asparagine glycan is attached at asparagine 322. 2 disulfide bridges follow: cysteine 417–cysteine 447 and cysteine 429–cysteine 464.

It belongs to the peptidase C13 family. Post-translationally, auto-catalytic activation. Seed specific. Restricted to developing seeds at 7 days after anthesis, and, at lower levels, detected in flowers. Detected in siliques, specifically in seed coats (at protein level).

Its subcellular location is the secreted. The protein localises to the extracellular space. It localises to the cell wall. It is found in the vacuole. It carries out the reaction Hydrolysis of proteins and small molecule substrates at -Asn-|-Xaa- bonds.. Its activity is regulated as follows. Strongly inhibited by biotin-YVAD-fmk (a caspase-1 inhibitor) and by Ac-DEVD-fmk. In terms of biological role, asparagine-specific endopeptidase that may be involved in processing of proteins targeted to vacuoles. Probably involved in post-translational proteolysis of seed storage proteins in the protein storage vacuole of developing seeds. Exhibits a caspase-1-like activity in extracellular granules. At the early stage of seed development, required for the formation of the seed coat, by regulating cell death of specific cell layers in inner integument. This chain is Vacuolar-processing enzyme delta-isozyme, found in Arabidopsis thaliana (Mouse-ear cress).